We begin with the raw amino-acid sequence, 295 residues long: GTP-binding protein GEM (295 aa).

The tract at residues 39 to 64 is disordered; the sequence is CNLRNRHSTAPEEHCRRSWSSDSTDS. GTP is bound by residues 81-88 and 190-193; these read GEQGVGKS and NKSD. The calmodulin-binding stretch occupies residues 265–284; that stretch reads ARRFWGKIVAKNNKNMAFKL.

It belongs to the small GTPase superfamily. RGK family. In terms of assembly, interacts with calmodulin in a Ca(2+)-dependent manner. Calmodulin binding significantly decreases GTP binding. Binds ROCK1. Phosphorylated on tyrosine residues.

It localises to the cell membrane. Could be a regulatory protein, possibly participating in receptor-mediated signal transduction at the plasma membrane. Has guanine nucleotide-binding activity but undetectable intrinsic GTPase activity. The sequence is that of GTP-binding protein GEM (Gem) from Mus musculus (Mouse).